We begin with the raw amino-acid sequence, 120 residues long: NAD(P)H-quinone oxidoreductase subunit 3, chloroplastic (120 aa).

A run of 3 helical transmembrane segments spans residues 2-22 (FLLY…VIPI), 64-84 (MFAL…PWAL), and 88-108 (ILGV…VLGL).

This sequence belongs to the complex I subunit 3 family. NDH is composed of at least 16 different subunits, 5 of which are encoded in the nucleus.

Its subcellular location is the plastid. The protein resides in the chloroplast thylakoid membrane. It catalyses the reaction a plastoquinone + NADH + (n+1) H(+)(in) = a plastoquinol + NAD(+) + n H(+)(out). The enzyme catalyses a plastoquinone + NADPH + (n+1) H(+)(in) = a plastoquinol + NADP(+) + n H(+)(out). Its function is as follows. NDH shuttles electrons from NAD(P)H:plastoquinone, via FMN and iron-sulfur (Fe-S) centers, to quinones in the photosynthetic chain and possibly in a chloroplast respiratory chain. The immediate electron acceptor for the enzyme in this species is believed to be plastoquinone. Couples the redox reaction to proton translocation, and thus conserves the redox energy in a proton gradient. This chain is NAD(P)H-quinone oxidoreductase subunit 3, chloroplastic, found in Oenothera argillicola (Appalachian evening primrose).